The sequence spans 558 residues: PE cleavage protein A (558 aa).

The PE domain maps to 1–93 (MSFLVVVPEF…SGSYAAAEAT (93 aa)). Aspartate 297 is a catalytic residue.

Belongs to the mycobacterial PE family. PGRS subfamily. In terms of processing, undergoes auto-proteolytic processing.

It is found in the secreted. The protein localises to the cell surface. Its function is as follows. Aspartic protease that processes the lipase LipY and other PE_PGRS proteins. Can also cleave itself. This is PE cleavage protein A from Mycobacterium tuberculosis (strain CDC 1551 / Oshkosh).